Here is a 431-residue protein sequence, read N- to C-terminus: 23S rRNA (uracil(1939)-C(5))-methyltransferase RlmD (431 aa).

The region spanning 10-68 is the TRAM domain; that stretch reads RVTTRQIITVKVNDLDSFGQGVARHNGKALFIPGLLPEESAEVIITEDKKQFARARVSR. Residues Cys81, Cys87, Cys90, and Cys161 each contribute to the [4Fe-4S] cluster site. Gln264, Phe293, Asn298, Glu314, Asn341, and Asp362 together coordinate S-adenosyl-L-methionine. Cys388 (nucleophile) is an active-site residue.

The protein belongs to the class I-like SAM-binding methyltransferase superfamily. RNA M5U methyltransferase family. RlmD subfamily.

The enzyme catalyses uridine(1939) in 23S rRNA + S-adenosyl-L-methionine = 5-methyluridine(1939) in 23S rRNA + S-adenosyl-L-homocysteine + H(+). Its function is as follows. Catalyzes the formation of 5-methyl-uridine at position 1939 (m5U1939) in 23S rRNA. The polypeptide is 23S rRNA (uracil(1939)-C(5))-methyltransferase RlmD (Salmonella choleraesuis (strain SC-B67)).